A 79-amino-acid polypeptide reads, in one-letter code: Reactive oxygen species modulator 1 (79 aa).

A helical membrane pass occupies residues 22 to 44 (GFVMGCAVGMAAGALFGTFSCLR). The tract at residues 42-60 (CLRIGMRGRELMGGIGKTM) is sufficient for antibacterial activity.

The protein belongs to the MGR2 family.

It localises to the mitochondrion inner membrane. Has antibacterial activity against a variety of bacteria including S.aureus, P.aeruginosa and M.tuberculosis. Acts by inducing bacterial membrane breakage. Its function is as follows. Induces production of reactive oxygen species (ROS) which are necessary for cell proliferation. May play a role in inducing oxidative DNA damage and replicative senescence. May play a role in the coordination of mitochondrial morphology and cell proliferation. The chain is Reactive oxygen species modulator 1 (ROMO1) from Bos taurus (Bovine).